Consider the following 386-residue polypeptide: 4-hydroxy-3-methylbut-2-en-1-yl diphosphate synthase (flavodoxin) (386 aa).

Residues C289, C292, C324, and E331 each coordinate [4Fe-4S] cluster.

This sequence belongs to the IspG family. [4Fe-4S] cluster is required as a cofactor.

The catalysed reaction is (2E)-4-hydroxy-3-methylbut-2-enyl diphosphate + oxidized [flavodoxin] + H2O + 2 H(+) = 2-C-methyl-D-erythritol 2,4-cyclic diphosphate + reduced [flavodoxin]. The protein operates within isoprenoid biosynthesis; isopentenyl diphosphate biosynthesis via DXP pathway; isopentenyl diphosphate from 1-deoxy-D-xylulose 5-phosphate: step 5/6. Converts 2C-methyl-D-erythritol 2,4-cyclodiphosphate (ME-2,4cPP) into 1-hydroxy-2-methyl-2-(E)-butenyl 4-diphosphate. The sequence is that of 4-hydroxy-3-methylbut-2-en-1-yl diphosphate synthase (flavodoxin) from Nitratidesulfovibrio vulgaris (strain ATCC 29579 / DSM 644 / CCUG 34227 / NCIMB 8303 / VKM B-1760 / Hildenborough) (Desulfovibrio vulgaris).